The chain runs to 301 residues: Ribonuclease HIII (301 aa).

One can recognise an RNase H type-2 domain in the interval 84–301 (ASAIGSDEVG…TEKAARIAKK (218 aa)). Asp-90, Glu-91, and Asp-195 together coordinate a divalent metal cation.

The protein belongs to the RNase HII family. RnhC subfamily. Mn(2+) is required as a cofactor. Mg(2+) serves as cofactor.

The protein resides in the cytoplasm. The enzyme catalyses Endonucleolytic cleavage to 5'-phosphomonoester.. Functionally, endonuclease that specifically degrades the RNA of RNA-DNA hybrids. This Geobacillus sp. (strain WCH70) protein is Ribonuclease HIII.